We begin with the raw amino-acid sequence, 862 residues long: Active breakpoint cluster region-related protein (862 aa).

Residues 30 to 84 (DAEGNEEHKSSREGSETMPYIDESPTMSPQLSARSQDSVDGVSPTPTEVLLPGGE) are disordered. Residues 34–44 (NEEHKSSREGS) show a composition bias toward basic and acidic residues. The segment covering 54–67 (PTMSPQLSARSQDS) has biased composition (polar residues). Residues 93–286 (MRKLVLSGVL…QNFLSSINED (194 aa)) form the DH domain. In terms of domain architecture, PH spans 303 to 462 (QLVKDGFLVE…WREAIQKLQK (160 aa)). Residues 488 to 616 (VHNVPIISHK…QSKNWHDDVI (129 aa)) form the C2 domain. The Rho-GAP domain maps to 650 to 848 (VKISVVTKRE…YYLQHPPISF (199 aa)).

The protein localises to the cell projection. The protein resides in the dendritic spine. It localises to the axon. It is found in the synapse. Its function is as follows. Protein with a unique structure having two opposing regulatory activities toward small GTP-binding proteins. The C-terminus is a GTPase-activating protein domain which stimulates GTP hydrolysis by RAC1, RAC2 and CDC42. Accelerates the intrinsic rate of GTP hydrolysis of RAC1 or CDC42, leading to down-regulation of the active GTP-bound form. The central Dbl homology (DH) domain functions as guanine nucleotide exchange factor (GEF) that modulates the GTPases CDC42, RHOA and RAC1. Promotes the conversion of CDC42, RHOA and RAC1 from the GDP-bound to the GTP-bound form. This chain is Active breakpoint cluster region-related protein (abr), found in Xenopus tropicalis (Western clawed frog).